Reading from the N-terminus, the 624-residue chain is Penicillin-binding protein 4 (624 aa).

The signal sequence occupies residues 1 to 21 (MTMLRKIIGWILLLCIIPLFA). Glu-96 serves as the catalytic Proton donor; for transglycosylase activity. Residue Ser-388 is the Acyl-ester intermediate; for transpeptidase activity of the active site.

It in the N-terminal section; belongs to the glycosyltransferase 51 family. In the C-terminal section; belongs to the transpeptidase family. The N-terminus is blocked.

The protein resides in the cell membrane. The enzyme catalyses [GlcNAc-(1-&gt;4)-Mur2Ac(oyl-L-Ala-gamma-D-Glu-L-Lys-D-Ala-D-Ala)](n)-di-trans,octa-cis-undecaprenyl diphosphate + beta-D-GlcNAc-(1-&gt;4)-Mur2Ac(oyl-L-Ala-gamma-D-Glu-L-Lys-D-Ala-D-Ala)-di-trans,octa-cis-undecaprenyl diphosphate = [GlcNAc-(1-&gt;4)-Mur2Ac(oyl-L-Ala-gamma-D-Glu-L-Lys-D-Ala-D-Ala)](n+1)-di-trans,octa-cis-undecaprenyl diphosphate + di-trans,octa-cis-undecaprenyl diphosphate + H(+). It carries out the reaction Preferential cleavage: (Ac)2-L-Lys-D-Ala-|-D-Ala. Also transpeptidation of peptidyl-alanyl moieties that are N-acyl substituents of D-alanine.. Cell wall formation. Synthesis of cross-linked peptidoglycan from the lipid intermediates. The enzyme has a penicillin-insensitive transglycosylase N-terminal domain (formation of linear glycan strands) and a penicillin-sensitive transpeptidase C-terminal domain (cross-linking of the peptide subunits). Has a partially redundant function with PBP-2A (pbpA) during spore outgrowth. The protein is Penicillin-binding protein 4 of Bacillus subtilis (strain 168).